The primary structure comprises 814 residues: Cadherin-15 (814 aa).

The N-terminal stretch at 1-21 is a signal peptide; it reads MDAAFLLVLGLLAQSLCLSLG. A propeptide spanning residues 22–60 is cleaved from the precursor; that stretch reads VPGWRRPTTLYPWRRAPALSRVRRAWVIPPISVSENHKR. 5 Cadherin domains span residues 61-152, 153-260, 261-375, 376-481, and 482-590; these read LPYP…RPAF, LQEA…APEF, TRDE…PPVF, QENP…DHAP, and VLAP…VCLP. The Extracellular portion of the chain corresponds to 61–606; it reads LPYPLVQIKS…AGGTGLSLGA (546 aa). Asparagine 227 is a glycosylation site (N-linked (GlcNAc...) asparagine). N-linked (GlcNAc...) asparagine glycans are attached at residues asparagine 531, asparagine 538, and asparagine 576. The chain crosses the membrane as a helical span at residues 607 to 626; that stretch reads LVIVLASALLLLVLVLLVAL. The Cytoplasmic segment spans residues 627 to 814; that stretch reads RARFWKQSRG…LLPRHRGRTA (188 aa). Disordered stretches follow at residues 636–663 and 676–703; these read GKGL…GEED and TALS…PPRV.

As to expression, expressed in the brain and cerebellum.

The protein localises to the cell membrane. In terms of biological role, cadherins are calcium-dependent cell adhesion proteins. They preferentially interact with themselves in a homophilic manner in connecting cells; cadherins may thus contribute to the sorting of heterogeneous cell types. M-cadherin is part of the myogenic program and may provide a trigger for terminal muscle differentiation. The sequence is that of Cadherin-15 (CDH15) from Homo sapiens (Human).